Consider the following 622-residue polypeptide: Histone-arginine methyltransferase CARMER (622 aa).

The region spanning 118–425 is the SAM-dependent MTase PRMT-type domain; it reads ASQYFQFYGY…QRQSYDVEID (308 aa). Residues Gln-131, Arg-140, Gly-164, Glu-186, Glu-215, and Thr-243 each contribute to the S-adenosyl-L-methionine site. Residue Arg-478 is modified to Asymmetric dimethylarginine; by autocatalysis. Disordered regions lie at residues 513–556 and 602–622; these read ANGG…QQQQ and QPIL…NQFY. A compositionally biased stretch (low complexity) spans 536-556; the sequence is QQQQQQQQQQQQAAVGPQQQQ.

It belongs to the class I-like SAM-binding methyltransferase superfamily. Protein arginine N-methyltransferase family. Homodimer. In terms of processing, the dimethylated protein is the major form.

Its subcellular location is the cytoplasm. The protein resides in the nucleus. It carries out the reaction L-arginyl-[protein] + 2 S-adenosyl-L-methionine = N(omega),N(omega)-dimethyl-L-arginyl-[protein] + 2 S-adenosyl-L-homocysteine + 2 H(+). Methylates (mono- and asymmetric dimethylation) the guanidino nitrogens of arginyl residues in proteins. May methylate histone H3 at 'Arg-17' and activate transcription via chromatin remodeling. The polypeptide is Histone-arginine methyltransferase CARMER (Anopheles gambiae (African malaria mosquito)).